The following is a 1172-amino-acid chain: Thrombospondin-2 (1172 aa).

Residues 1 to 18 form the signal peptide; it reads MVWRLVLLALWVWPSTQA. Residues 19–215 enclose the Laminin G-like domain; sequence GHQDKDTTFD…LQNVHLVFEN (197 aa). A heparin-binding region spans residues 19 to 232; sequence GHQDKDTTFD…KKGCQQGQGA (214 aa). N-linked (GlcNAc...) asparagine glycans are attached at residues Asn151, Asn316, and Asn330. The VWFC domain occupies 318–375; that stretch reads SACWQDGRFFAENETWVVDSCTTCTCKKFKTICHQITCPPATCASPSFVEGECCPSCL. TSP type-1 domains are found at residues 381-431, 437-492, and 494-549; these read EEGW…SKCD, DGGW…APCP, and DGRW…RSCP. Disulfide bonds link Cys393–Cys425, Cys397–Cys430, Cys408–Cys415, Cys449–Cys486, Cys453–Cys491, Cys464–Cys476, Cys506–Cys543, Cys510–Cys548, Cys521–Cys533, Cys553–Cys564, Cys558–Cys574, Cys577–Cys588, Cys594–Cys610, Cys601–Cys619, Cys622–Cys646, Cys652–Cys665, Cys659–Cys678, Cys680–Cys691, Cys707–Cys715, Cys720–Cys740, Cys756–Cys776, Cys779–Cys799, Cys815–Cys835, Cys838–Cys858, Cys876–Cys896, Cys912–Cys932, and Cys948–Cys1169. N-linked (GlcNAc...) asparagine glycosylation is present at Asn457. Residues 549 to 589 enclose the EGF-like 1 domain; that stretch reads PVDGCLSNPCFPGAQCSSFPDGSWSCGSCPVGFLGNGTHCE. An N-linked (GlcNAc...) asparagine glycan is attached at Asn584. The 45-residue stretch at 648 to 692 folds into the EGF-like 2 domain; sequence PENPCKDKTHNCHKHAECIYLGHFSDPMYKCECQTGYAGDGLICG. TSP type-3 repeat units lie at residues 693-728, 729-764, 765-787, 788-823, 824-846, 847-884, 885-920, and 921-956; these read EDSD…NSGQ, EDFD…NPRQ, ADYD…NPAQ, IDTD…NTDQ, RDTD…NPDQ, TDVD…NANQ, ADHD…NPDQ, and EDLD…AISE. N-linked (GlcNAc...) asparagine glycosylation is present at Asn710. Residues 843-931 are disordered; that stretch reads NPDQTDVDND…DLDGDGRGDI (89 aa). The span at 847 to 866 shows a compositional bias: acidic residues; that stretch reads TDVDNDLVGDQCDNNEDIDD. A compositionally biased stretch (polar residues) spans 870–884; it reads QNNQDNCPYISNANQ. The span at 896–905 shows a compositional bias: acidic residues; the sequence is CDPDDDNDGV. A Cell attachment site motif is present at residues 928–930; sequence RGD. The TSP C-terminal domain maps to 960 to 1172; that stretch reads RNFQMVPLDP…SDLKYECRDI (213 aa). Residue Asn1069 is glycosylated (N-linked (GlcNAc...) asparagine).

It belongs to the thrombospondin family. As to quaternary structure, homotrimer; disulfide-linked. Interacts (via the TSP type I repeats) with CD36; the interaction conveys an antiangiogenic effect. Interacts (via the TSP type I repeats) with HRG; the interaction blocks the antiangiogenic effect of THBS2 with CD36. Can bind to fibrinogen, fibronectin, laminin and type V collagen. As to expression, high expression in invertebral disk tissue.

Adhesive glycoprotein that mediates cell-to-cell and cell-to-matrix interactions. Ligand for CD36 mediating antiangiogenic properties. This is Thrombospondin-2 (THBS2) from Homo sapiens (Human).